The chain runs to 265 residues: TATA-box-binding protein (265 aa).

Residues 1–40 (MYNPSQAVPVSLHKNQDNQDGGQQRSHYPQISSQQSQSYL) are disordered. A compositionally biased stretch (polar residues) spans 18-29 (NQDGGQQRSHYP). 2 consecutive repeat copies span residues 91–167 (LQNI…ARVV) and 181–258 (IQNM…YPIL).

The protein belongs to the TBP family. In terms of assembly, belongs to the TFIID complex together with the TBP-associated factors (TAFs). Binds DNA as monomer.

The protein resides in the nucleus. In terms of biological role, general transcription factor that functions at the core of the DNA-binding multiprotein factor TFIID. Binding of TFIID to the TATA box is the initial transcriptional step of the pre-initiation complex (PIC), playing a role in the activation of eukaryotic genes transcribed by RNA polymerase II. This chain is TATA-box-binding protein, found in Strongylocentrotus purpuratus (Purple sea urchin).